The primary structure comprises 149 residues: Large ribosomal subunit protein eL19 (149 aa).

The interval Lys-67 to Arg-90 is disordered.

This sequence belongs to the eukaryotic ribosomal protein eL19 family. As to quaternary structure, part of the 50S ribosomal subunit.

Functionally, binds to the 23S rRNA. This is Large ribosomal subunit protein eL19 from Archaeoglobus fulgidus (strain ATCC 49558 / DSM 4304 / JCM 9628 / NBRC 100126 / VC-16).